Here is a 217-residue protein sequence, read N- to C-terminus: 3-oxoadipate CoA-transferase subunit B (217 aa).

Residue Glu-50 is part of the active site.

This sequence belongs to the 3-oxoacid CoA-transferase subunit B family. Heterodimer.

It catalyses the reaction 3-oxoadipate + succinyl-CoA = 3-oxoadipyl-CoA + succinate. It participates in aromatic compound metabolism; beta-ketoadipate pathway; acetyl-CoA and succinyl-CoA from 3-oxoadipate: step 1/2. The protein is 3-oxoadipate CoA-transferase subunit B (pcaJ) of Acinetobacter baylyi (strain ATCC 33305 / BD413 / ADP1).